A 97-amino-acid polypeptide reads, in one-letter code: uncharacterized protein (97 aa).

The tract at residues 27 to 50 (IGESEDKTNSRGQPATMKEDEVED) is disordered.

This is an uncharacterized protein from Caldicellulosiruptor saccharolyticus (Caldocellum saccharolyticum).